Consider the following 966-residue polypeptide: Phosphoenolpyruvate carboxylase (966 aa).

Phosphoserine is present on serine 10. Residues histidine 171 and lysine 601 contribute to the active site.

Belongs to the PEPCase type 1 family. As to quaternary structure, homotetramer. It depends on Mg(2+) as a cofactor.

Its subcellular location is the cytoplasm. The catalysed reaction is oxaloacetate + phosphate = phosphoenolpyruvate + hydrogencarbonate. Its activity is regulated as follows. By light-reversible phosphorylation. Its function is as follows. Through the carboxylation of phosphoenolpyruvate (PEP) it forms oxaloacetate, a four-carbon dicarboxylic acid source for the tricarboxylic acid cycle. This Medicago sativa (Alfalfa) protein is Phosphoenolpyruvate carboxylase (PEPC).